The primary structure comprises 680 residues: MIDRYKHQQLRIGSVSPQQISAWATKILPNGEIVGEVTKPYTFHYKTNKPEKMDYFVKNFGPIKSGICACGNYRVIGDEKEDPKFCEQCGVEFVDSRIRRYQMGYIKLACPVTHVWYLKRLPSYIANLLDKPLKELEGLVYCDFSFARPITKKPTFLRLRGLFEYEIQSWKYSIPLFFTTQGFDTFRNREISTGAGAIREQLADLDLRIIIENSLVEWEELGEEGHTGNEWEDRKVGRRKDFLVRRVELAKHFIRTNIEPEWMVLCLLPVLPPELRPIIQIDGGKLMSSDINELYRRVIYRNNTLTDLLTTSRSTPGELVMCQEKLVQEAVDTLLDNGIRGQPMRDGHNKVYKSFSDVIEGKEGRFRETLLGKRVDYSGRSVIVVGPSLSLHRCGLPREIAIELFQTFVIRGLIRQHLASNIGVAKSKIREKEPIVWEILQEVMQGHPVLLNRAPTLHRLGIQAFQPVLVEGRAICLHPLVCKGFNADFDGDQMAVHVPLSLEAQVEARLLMFSHMNLLSPAIGDPISVPTQDMLIGLYVLTSGNHRGICVNRYNPCNRRNYQNQKRSDNSHYKYTKEPFFSNSYDAIGAYRQKRINLDSPLWLRWRLDQRVIASRETPIEVHYESLGTFYEIYGHYLIVRSLKKQILFIYIRTTVGHIALYREIEEAIQGFSRAYSSGT.

Positions 68, 70, 86, and 89 each coordinate Zn(2+). Residues D488, D490, and D492 each contribute to the Mg(2+) site.

It belongs to the RNA polymerase beta' chain family. RpoC1 subfamily. As to quaternary structure, in plastids the minimal PEP RNA polymerase catalytic core is composed of four subunits: alpha, beta, beta', and beta''. When a (nuclear-encoded) sigma factor is associated with the core the holoenzyme is formed, which can initiate transcription. The cofactor is Mg(2+). Zn(2+) is required as a cofactor.

It is found in the plastid. The protein localises to the chloroplast. It catalyses the reaction RNA(n) + a ribonucleoside 5'-triphosphate = RNA(n+1) + diphosphate. In terms of biological role, DNA-dependent RNA polymerase catalyzes the transcription of DNA into RNA using the four ribonucleoside triphosphates as substrates. This is DNA-directed RNA polymerase subunit beta' from Nicotiana tabacum (Common tobacco).